The chain runs to 50 residues: Kappa-actitoxin-Bcs4a (50 aa).

The protein belongs to the sea anemone type 5 potassium channel toxin family. Post-translationally, contains 4 disulfide bonds.

Its subcellular location is the secreted. It localises to the nematocyst. Its function is as follows. Inhibits voltage-gated potassium channels (Kv1/KCNA). Is potent on Drosophila Shaker IR channels (IC(50)=94.25 nM), and rKv1.2/KCNA2 (IC(50)=172.59 nM), and moderately active on hKv1.3/KCNA3 (IC(50)=1006.48 nM), rKv1.6/KCNA6 (IC(50)=2245.93 nM), and Kv1.1/KCNA1 (IC(50) around 3 uM). In vivo, induces a rapid increase in swimming speed on zebrafish larvae, as well as death which occurs between 2 and 18 hours later. Also paralyzes swimming crabs (C.danae) when injected at the junction between the body and the walking leg. The chain is Kappa-actitoxin-Bcs4a from Bunodosoma caissarum (Sea anemone).